Reading from the N-terminus, the 273-residue chain is Putative carboxypeptidase YodJ (273 aa).

Residues 1 to 23 form the signal peptide; it reads MKKSGKWFSLAAALSVTAIVGAG. The N-palmitoyl cysteine moiety is linked to residue Cys-24. A lipid anchor (S-diacylglycerol cysteine) is attached at Cys-24. The tract at residues 27–58 is disordered; the sequence is SNGDAQKDTKTTAETKQTEQKTADSKKSNTQN. Residues 31 to 53 show a composition bias toward basic and acidic residues; the sequence is AQKDTKTTAETKQTEQKTADSKK.

Belongs to the peptidase M15B family.

The protein localises to the cell membrane. This chain is Putative carboxypeptidase YodJ (yodJ), found in Bacillus subtilis (strain 168).